The following is a 2009-amino-acid chain: Rootletin (2009 aa).

Coiled coils occupy residues 74-265 (EMAS…VTSD) and 346-438 (ASLH…LRLQ). 5 disordered regions span residues 462–519 (ALSD…CSDS), 575–594 (RDQTAASAQAQEDAQREAQR), 636–665 (ELKRQHNQLEDAQEDSVQEGARARRELERS), 1180–1225 (EAQR…ELRS), and 1448–1501 (GRVS…EAVR). The segment covering 463-484 (LSDTESGVQLSSSERTADTSDG) has biased composition (polar residues). 2 coiled-coil regions span residues 550–1058 (LGSV…LLAE) and 1091–1439 (LEME…GLRS). The segment covering 577 to 586 (QTAASAQAQE) has biased composition (low complexity). Residues 656–665 (ARARRELERS) show a composition bias toward basic and acidic residues. A phosphoserine mark is found at S1453, S1463, and S1469. Y1475 carries the phosphotyrosine modification. Phosphoserine is present on residues S1476, S1479, S1483, S1489, and S1568. Residues 1479 to 1494 (SQPPSPGLIASPAPPD) are compositionally biased toward pro residues. 2 coiled-coil regions span residues 1498 to 1697 (EAVR…GTLQ) and 1744 to 1998 (HLQK…RSSA). Positions 1957-2009 (QVQTERTLEARERAHRQRVSGLEEQVSTLKAQLHQELRRSSASVSLPPGTPEK) are disordered.

The protein belongs to the rootletin family. As to quaternary structure, homomer. Interacts with KLC3, NEK2 and the N-terminus of CEP250. Interacts with CEP44. Phosphorylated by NEK2 which may regulate its association with centrosomes. As to expression, highest expression detected in photoreceptor cells of retina. Expressed at lower levels in brain, trachea and kidney. Detected in all major ciliated epithelia. During embryonic development, enriched along the apical domains of neuroepithelium in brain ventricular zone, in primordia of retinal pigment epithelia and in neural retina.

The protein resides in the cytoplasm. Its subcellular location is the cytoskeleton. The protein localises to the microtubule organizing center. It is found in the centrosome. It localises to the centriole. The protein resides in the cilium basal body. Functionally, major structural component of the ciliary rootlet, a cytoskeletal-like structure in ciliated cells which originates from the basal body at the proximal end of a cilium and extends proximally toward the cell nucleus. Furthermore, is required for the correct positioning of the cilium basal body relative to the cell nucleus, to allow for ciliogenesis. Contributes to centrosome cohesion before mitosis. The polypeptide is Rootletin (Mus musculus (Mouse)).